The chain runs to 620 residues: 1-deoxy-D-xylulose-5-phosphate synthase (620 aa).

Thiamine diphosphate-binding positions include His-80 and 121–123 (GHS). Asp-152 is a Mg(2+) binding site. Residues 153–154 (GA), Asn-181, Tyr-288, and Glu-370 each bind thiamine diphosphate. Residue Asn-181 participates in Mg(2+) binding.

Belongs to the transketolase family. DXPS subfamily. As to quaternary structure, homodimer. Mg(2+) serves as cofactor. The cofactor is thiamine diphosphate.

The enzyme catalyses D-glyceraldehyde 3-phosphate + pyruvate + H(+) = 1-deoxy-D-xylulose 5-phosphate + CO2. The protein operates within metabolic intermediate biosynthesis; 1-deoxy-D-xylulose 5-phosphate biosynthesis; 1-deoxy-D-xylulose 5-phosphate from D-glyceraldehyde 3-phosphate and pyruvate: step 1/1. Catalyzes the acyloin condensation reaction between C atoms 2 and 3 of pyruvate and glyceraldehyde 3-phosphate to yield 1-deoxy-D-xylulose-5-phosphate (DXP). The polypeptide is 1-deoxy-D-xylulose-5-phosphate synthase (Escherichia coli (strain SMS-3-5 / SECEC)).